Reading from the N-terminus, the 115-residue chain is GSSGSSGSSGSSGSSGSSGSSGSSGSSGSSGSSGSSGSSGSSGSSGSSGSSGSSGSSGSSGSSGSSGSSGSSGSSGSSGSSGSSSSSSSNGSGSSSGSSQSSGSQGGSSSTSSSN.

Positions 1-115 are disordered; that stretch reads GSSGSSGSSG…GGSSSTSSSN (115 aa).

In terms of tissue distribution, produced exclusively in the middle (MSG) section of silk glands.

It localises to the secreted. In terms of biological role, provides the silk fibroin thread with a sticky coating. Acts as a cement by sticking silk threads together. The protein is Sericin-1 (SER1) of Galleria mellonella (Greater wax moth).